The following is a 262-amino-acid chain: Hydroxyethylthiazole kinase (262 aa).

Met50 lines the substrate pocket. ATP is bound by residues Arg125 and Thr171. Position 198 (Gly198) interacts with substrate.

Belongs to the Thz kinase family. It depends on Mg(2+) as a cofactor.

It carries out the reaction 5-(2-hydroxyethyl)-4-methylthiazole + ATP = 4-methyl-5-(2-phosphooxyethyl)-thiazole + ADP + H(+). It participates in cofactor biosynthesis; thiamine diphosphate biosynthesis; 4-methyl-5-(2-phosphoethyl)-thiazole from 5-(2-hydroxyethyl)-4-methylthiazole: step 1/1. Catalyzes the phosphorylation of the hydroxyl group of 4-methyl-5-beta-hydroxyethylthiazole (THZ). This chain is Hydroxyethylthiazole kinase, found in Escherichia coli O17:K52:H18 (strain UMN026 / ExPEC).